Reading from the N-terminus, the 247-residue chain is MAGEADGRFKGLLVPILLPEKCYDQLFVQWDLLHVPCLKILLSKGLGLGIVAGSLLVKLPQVFKLLGAKSAEGLSLQSVMLELVALTGTVVYSITNNFPFSSWGEALFLTLQTVAICFLVMHYRGETVKGVAFLACYAMVLLALLSPLTPLAVVTLLQASNVPAVVVGKLLQAATNYRNGHTGQLSAITVFMLFGGSLARIFTSVQETGDPLMAGVFVVSSLCNGLIAAQVLFYWNAKAPHKQKKEQ.

At A2 the chain carries N-acetylalanine. 7 consecutive transmembrane segments (helical) span residues 37–57 (CLKI…SLLV), 74–94 (LSLQ…VYSI), 100–120 (FSSW…CFLV), 128–145 (VKGV…LALL), 151–171 (LAVV…GKLL), 185–205 (LSAI…FTSV), and 213–233 (MAGV…QVLF). A PQ-loop 1 domain is found at 39 to 105 (KILLSKGLGL…NNFPFSSWGE (67 aa)). The region spanning 159 to 216 (ASNVPAVVVGKLLQAATNYRNGHTGQLSAITVFMLFGGSLARIFTSVQETGDPLMAGV) is the PQ-loop 2 domain.

This sequence belongs to the MPDU1 (TC 2.A.43.3) family.

The protein resides in the membrane. Required for normal utilization of mannose-dolichol phosphate (Dol-P-Man) in the synthesis of N-linked and O-linked oligosaccharides and GPI anchors. This chain is Mannose-P-dolichol utilization defect 1 protein (Mpdu1), found in Mus musculus (Mouse).